The primary structure comprises 268 residues: Ribosomal RNA small subunit methyltransferase A (268 aa).

S-adenosyl-L-methionine contacts are provided by Asn18, Leu20, Gly45, Glu66, Asp91, and Asn112.

It belongs to the class I-like SAM-binding methyltransferase superfamily. rRNA adenine N(6)-methyltransferase family. RsmA subfamily.

Its subcellular location is the cytoplasm. The enzyme catalyses adenosine(1518)/adenosine(1519) in 16S rRNA + 4 S-adenosyl-L-methionine = N(6)-dimethyladenosine(1518)/N(6)-dimethyladenosine(1519) in 16S rRNA + 4 S-adenosyl-L-homocysteine + 4 H(+). In terms of biological role, specifically dimethylates two adjacent adenosines (A1518 and A1519) in the loop of a conserved hairpin near the 3'-end of 16S rRNA in the 30S particle. May play a critical role in biogenesis of 30S subunits. In Shewanella sp. (strain MR-7), this protein is Ribosomal RNA small subunit methyltransferase A.